A 623-amino-acid polypeptide reads, in one-letter code: Vacuolar-sorting receptor 1 (623 aa).

A signal peptide spans 1–22; it reads MKCWRLSAILFLGFMLTSLSTA. The Lumenal portion of the chain corresponds to 23–564; it reads RFVVEKNSLS…SKTASQAKST (542 aa). In terms of domain architecture, PA spans 54–163; that stretch reads QYGGSMAGNV…SFGEKLKDAI (110 aa). Residue asparagine 143 is glycosylated (N-linked (GlcNAc...) asparagine). 2 EGF-like domains span residues 411 to 461 and 464 to 511; these read ETNE…TTCE and GHGR…KNCE. 6 disulfide bridges follow: cysteine 415–cysteine 433, cysteine 422–cysteine 442, cysteine 444–cysteine 460, cysteine 468–cysteine 488, cysteine 475–cysteine 496, and cysteine 498–cysteine 510. The 43-residue stretch at 512-554 folds into the EGF-like 3; calcium-binding domain; that stretch reads DIDECKDKKACQCPECSCKNTWGSYNCSCSGDLLYIKDQDTCI. Asparagine 537 carries an N-linked (GlcNAc...) asparagine glycan. Cysteine 540 and cysteine 553 are joined by a disulfide. The chain crosses the membrane as a helical span at residues 565–585; it reads WAAFWVVLIALAMIAGGGFLV. Over 586–623 the chain is Cytoplasmic; the sequence is YKYRIRQYMDSEIRAIMAQYMPLDSQEEGPNHVNHQRG. The Tyrosine-based internalization motif signature appears at 605-608; the sequence is YMPL.

This sequence belongs to the VSR (BP-80) family. In terms of assembly, interacts with the N-terminal propeptide of aleurein (proaleurein).

Its subcellular location is the membrane. It localises to the golgi apparatus membrane. The protein localises to the cytoplasmic vesicle. The protein resides in the clathrin-coated vesicle membrane. It is found in the prevacuolar compartment membrane. In terms of biological role, vacuolar-sorting receptor (VSR) involved in clathrin-coated vesicles sorting from Golgi apparatus to vacuoles. Seems to binds preferentially proteins containing a N-terminal NPIR motif. In Pisum sativum (Garden pea), this protein is Vacuolar-sorting receptor 1 (BP80).